The following is a 512-amino-acid chain: Polyamine oxidase 1 (512 aa).

Residues E38 and R46 each contribute to the FAD site. The interval D448 to R470 is disordered. Residue E476 coordinates FAD.

The protein belongs to the flavin monoamine oxidase family. FAD serves as cofactor.

The protein resides in the cytoplasm. It catalyses the reaction spermine + O2 + H2O = 3-aminopropanal + spermidine + H2O2. The enzyme catalyses N(1)-acetylspermine + O2 + H2O = 3-acetamidopropanal + spermidine + H2O2. It carries out the reaction norspermine + O2 + H2O = norspermidine + 3-aminopropanal + H2O2. The catalysed reaction is thermospermine + O2 + H2O = 3-aminopropanal + spermidine + H2O2. It participates in amine and polyamine degradation; spermine degradation. In terms of biological role, flavoenzyme involved in polyamine back-conversion. Catalyzes the oxidation of the secondary amino group of polyamines, such as spermine and its acetyl derivatives. Substrate preference is thermospermine &gt; spermine &gt; norspermine &gt; N(1)-acetylspermine. No activity detected when putrescine or spermidine are used as substrates. Plays an important role in the regulation of polyamine intracellular concentration. This is Polyamine oxidase 1 from Oryza sativa subsp. japonica (Rice).